Reading from the N-terminus, the 598-residue chain is Arylsulfatase J (598 aa).

The first 47 residues, 1–47, serve as a signal peptide directing secretion; that stretch reads MAPRDSAEPLPPLSPQAWAWSGKFLAMGALAGFSVLSLLTYGYLCWG. Aspartate 82, aspartate 83, and cysteine 120 together coordinate Ca(2+). Residue cysteine 120 is the Nucleophile of the active site. The residue at position 120 (cysteine 120) is a 3-oxoalanine (Cys). N-linked (GlcNAc...) asparagine glycosylation occurs at asparagine 155. Lysine 174 serves as a coordination point for substrate. The active site involves histidine 176. Histidine 267 lines the substrate pocket. Residues asparagine 304 and asparagine 316 are each glycosylated (N-linked (GlcNAc...) asparagine). Ca(2+) contacts are provided by aspartate 325 and asparagine 326. Lysine 343 is a substrate binding site. Asparagine 429, asparagine 495, asparagine 525, and asparagine 563 each carry an N-linked (GlcNAc...) asparagine glycan. Positions 532 to 598 are disordered; it reads RYPPKDPRSN…IKCHPSVATG (67 aa). Residues 559-583 are compositionally biased toward basic residues; the sequence is KKKSNKTKAKKMQKKKSKARMRKQL.

This sequence belongs to the sulfatase family. Requires Ca(2+) as cofactor. In terms of processing, the conversion to 3-oxoalanine (also known as C-formylglycine, FGly), of a serine or cysteine residue in prokaryotes and of a cysteine residue in eukaryotes, is critical for catalytic activity.

Its subcellular location is the secreted. This chain is Arylsulfatase J (Arsj), found in Mus musculus (Mouse).